Consider the following 495-residue polypeptide: Phytochrome A type 5 (495 aa).

A compositionally biased stretch (low complexity) spans 1-21 (MSSSRPASSSSSRNRQSSQAR). The disordered stretch occupies residues 1–24 (MSSSRPASSSSSRNRQSSQARVLA). The GAF domain maps to 217 to 402 (SMEMLCNTVV…VFAVHVNREF (186 aa)). Residue Cys-322 coordinates phytochromobilin.

This sequence belongs to the phytochrome family. Homodimer. Post-translationally, contains one covalently linked phytochromobilin chromophore.

Functionally, regulatory photoreceptor which exists in two forms that are reversibly interconvertible by light: the Pr form that absorbs maximally in the red region of the spectrum and the Pfr form that absorbs maximally in the far-red region. Photoconversion of Pr to Pfr induces an array of morphogenic responses, whereas reconversion of Pfr to Pr cancels the induction of those responses. Pfr controls the expression of a number of nuclear genes including those encoding the small subunit of ribulose-bisphosphate carboxylase, chlorophyll A/B binding protein, protochlorophyllide reductase, rRNA, etc. It also controls the expression of its own gene(s) in a negative feedback fashion. The sequence is that of Phytochrome A type 5 (PHYA5) from Avena sativa (Oat).